We begin with the raw amino-acid sequence, 121 residues long: ATP synthase epsilon chain (121 aa).

It belongs to the ATPase epsilon chain family. F-type ATPases have 2 components, CF(1) - the catalytic core - and CF(0) - the membrane proton channel. CF(1) has five subunits: alpha(3), beta(3), gamma(1), delta(1), epsilon(1). CF(0) has three main subunits: a, b and c.

The protein resides in the cell membrane. Produces ATP from ADP in the presence of a proton gradient across the membrane. This chain is ATP synthase epsilon chain, found in Mycolicibacterium vanbaalenii (strain DSM 7251 / JCM 13017 / BCRC 16820 / KCTC 9966 / NRRL B-24157 / PYR-1) (Mycobacterium vanbaalenii).